A 422-amino-acid chain; its full sequence is MVLIVGFNLRTSIASFSPICRSLFLFPKYRSRIIRPVVLLEKPFDKHFYATDSNPLITGFPETSKNCPPSVAATKNRLLMNCTEFDDHGNVRVISGDFKKMDLCKQNGLLPRDLRKLNTSINSIVPVILVREGSILINLLHIRALIKANSVLLFDVYGSQHSHSQSQFIYELEGRLKQKSSDFGWLPYEMRALETILVSVVNTLDSELHVLHNLVSDLLADFELDINQERLRTLLIFSKRLSGFLKKATLIRDVLDELLEQDQDLAGMYLTERLKTGKPRDLDKHDEVELLLETYCKQVDEIVQQTDNLVGNIRSTEEICNIMLDANRNSLMLLGLKLSAMTLGLGFGAVVASLYGMNLQNGLENHPYAFYITTGSIFAFAAFLSSLGILKIRRLKRIQMALYHRCNLPISLDPRSLRPPYL.

The transit peptide at 1–49 directs the protein to the mitochondrion; sequence MVLIVGFNLRTSIASFSPICRSLFLFPKYRSRIIRPVVLLEKPFDKHFY. Residues 331–351 traverse the membrane as a helical segment; sequence LMLLGLKLSAMTLGLGFGAVV. The YGMN signature appears at 355-358; the sequence is YGMN. The helical transmembrane segment at 370-390 threads the bilayer; sequence FYITTGSIFAFAAFLSSLGIL.

The protein belongs to the CorA metal ion transporter (MIT) (TC 1.A.35) family. Homopentamer. Forms homooligomers. Interacts with MFM1.

It localises to the mitochondrion inner membrane. In terms of biological role, high-conductance magnesium-selective channel that mediates the influx of magnesium into the mitochondrial matrix. Essential for the splicing of mRNA group II introns in mitochondria by affecting mitochondrial magnesium concentrations, which are critical for group II intron splicing. It also suppresses a variety of mitochondrial intron mutations and its absence may disturb the assembly of mitochondrial membrane complexes. This chain is Mitochondrial inner membrane magnesium transporter mrs2 (mrs2), found in Schizosaccharomyces pombe (strain 972 / ATCC 24843) (Fission yeast).